Reading from the N-terminus, the 232-residue chain is 5'-methylthioadenosine/S-adenosylhomocysteine nucleosidase (232 aa).

The active-site Proton acceptor is the E12. Residues G78, I152, and 173 to 174 (ME) contribute to the substrate site. D197 (proton donor) is an active-site residue.

It belongs to the PNP/UDP phosphorylase family. MtnN subfamily. Homodimer.

The catalysed reaction is S-adenosyl-L-homocysteine + H2O = S-(5-deoxy-D-ribos-5-yl)-L-homocysteine + adenine. It catalyses the reaction S-methyl-5'-thioadenosine + H2O = 5-(methylsulfanyl)-D-ribose + adenine. It carries out the reaction 5'-deoxyadenosine + H2O = 5-deoxy-D-ribose + adenine. The protein operates within amino-acid biosynthesis; L-methionine biosynthesis via salvage pathway; S-methyl-5-thio-alpha-D-ribose 1-phosphate from S-methyl-5'-thioadenosine (hydrolase route): step 1/2. Functionally, catalyzes the irreversible cleavage of the glycosidic bond in both 5'-methylthioadenosine (MTA) and S-adenosylhomocysteine (SAH/AdoHcy) to adenine and the corresponding thioribose, 5'-methylthioribose and S-ribosylhomocysteine, respectively. Also cleaves 5'-deoxyadenosine, a toxic by-product of radical S-adenosylmethionine (SAM) enzymes, into 5-deoxyribose and adenine. Thus, is required for in vivo function of the radical SAM enzymes biotin synthase and lipoic acid synthase, that are inhibited by 5'-deoxyadenosine accumulation. The chain is 5'-methylthioadenosine/S-adenosylhomocysteine nucleosidase from Klebsiella pneumoniae (strain 342).